We begin with the raw amino-acid sequence, 186 residues long: ADP-ribosylation factor-like protein 6 (186 aa).

A lipid anchor (N-myristoyl glycine) is attached at glycine 2. GTP is bound by residues 24-31 (GLDNSGKT), threonine 50, 69-73 (DMSGQ), glycine 72, 130-133 (NKMD), and alanine 164. Threonine 50 is a binding site for Mg(2+).

This sequence belongs to the small GTPase superfamily. Arf family. Interacts with SEC61B, ARL6IP1, ARL6IP2, ARL6IP3, ARL6IP4 ARL6IP5 and ARL6IP6. Interacts (GTP-bound form) with the BBSome a complex that contains BBS1, BBS2, BBS4, BBS5, BBS7, BBS8/TTC8, BBS9 and BBIP10. Interacts (GTP-free form) with IFT27.

Its subcellular location is the cell projection. The protein localises to the cilium membrane. The protein resides in the cytoplasm. It is found in the cytoskeleton. It localises to the cilium axoneme. Its subcellular location is the cilium basal body. Involved in membrane protein trafficking at the base of the ciliary organelle. Mediates recruitment onto plasma membrane of the BBSome complex which would constitute a coat complex required for sorting of specific membrane proteins to the primary cilia. Together with the BBSome complex and LTZL1, controls SMO ciliary trafficking and contributes to the sonic hedgehog (SHH) pathway regulation. May regulate cilia assembly and disassembly and subsequent ciliary signaling events such as the Wnt signaling cascade. Isoform 2 may be required for proper retinal function and organization. This is ADP-ribosylation factor-like protein 6 (ARL6) from Pongo abelii (Sumatran orangutan).